The sequence spans 229 residues: Large ribosomal subunit protein uL1 (229 aa).

Belongs to the universal ribosomal protein uL1 family. In terms of assembly, part of the 50S ribosomal subunit.

Functionally, binds directly to 23S rRNA. The L1 stalk is quite mobile in the ribosome, and is involved in E site tRNA release. Protein L1 is also a translational repressor protein, it controls the translation of the L11 operon by binding to its mRNA. The chain is Large ribosomal subunit protein uL1 from Phenylobacterium zucineum (strain HLK1).